A 126-amino-acid polypeptide reads, in one-letter code: Small ribosomal subunit protein uS8 (126 aa).

This sequence belongs to the universal ribosomal protein uS8 family. Part of the 30S ribosomal subunit. Contacts proteins S5 and S12.

In terms of biological role, one of the primary rRNA binding proteins, it binds directly to 16S rRNA central domain where it helps coordinate assembly of the platform of the 30S subunit. This is Small ribosomal subunit protein uS8 from Desulfovibrio desulfuricans (strain ATCC 27774 / DSM 6949 / MB).